The chain runs to 308 residues: Pseudouridine-5'-phosphate glycosidase (308 aa).

Residue Glu26 is the Proton donor of the active site. Lys87 and Val107 together coordinate substrate. Mn(2+) is bound at residue Asp139. Position 141-143 (141-143 (SAD)) interacts with substrate. Residue Lys160 is the Nucleophile of the active site.

This sequence belongs to the pseudouridine-5'-phosphate glycosidase family. Homotrimer. The cofactor is Mn(2+).

The catalysed reaction is D-ribose 5-phosphate + uracil = psi-UMP + H2O. In terms of biological role, catalyzes the reversible cleavage of pseudouridine 5'-phosphate (PsiMP) to ribose 5-phosphate and uracil. Functions biologically in the cleavage direction, as part of a pseudouridine degradation pathway. The chain is Pseudouridine-5'-phosphate glycosidase from Legionella pneumophila subsp. pneumophila (strain Philadelphia 1 / ATCC 33152 / DSM 7513).